Here is a 668-residue protein sequence, read N- to C-terminus: Trehalase (668 aa).

The tract at residues 1–23 (MVLQQTEPTDGADRKASDGPLTV) is disordered.

It belongs to the glycosyl hydrolase 15 family. In terms of assembly, homomultimer of 20 or more subunits. Mg(2+) serves as cofactor. It depends on phosphate as a cofactor.

The catalysed reaction is alpha,alpha-trehalose + H2O = alpha-D-glucose + beta-D-glucose. Its pathway is glycan degradation; trehalose degradation; D-glucose from alpha,alpha-trehalose: step 1/1. With respect to regulation, inhibited by pyrophosphate and polyphosphates. Also competitively inhibited by validoxylamine and castanospermine, but not by trehazolin. Its function is as follows. Catalyzes the hydrolysis of alpha,alpha-trehalose into two molecules of D-glucose. Does not hydrolyze maltose, isomaltose, sucrose, cellobiose, p-nitrophenyl-alpha-D-glucopyranoside, and methyl-alpha-D-glucopyranoside. Is also inactive on alpha,beta-trehalose, beta,beta-trehalose, alpha,alpha-trehalose-6,6'-dibehenate, trehalulose, nigerose, and trehalose dimycolate. In Mycolicibacterium smegmatis (strain ATCC 700084 / mc(2)155) (Mycobacterium smegmatis), this protein is Trehalase.